The primary structure comprises 450 residues: Nicotinamide phosphoribosyltransferase (450 aa).

Residue Arg210 coordinates diphosphate. Beta-nicotinamide D-ribonucleotide is bound at residue Asp233. Positions 249 and 310 each coordinate diphosphate. Beta-nicotinamide D-ribonucleotide-binding positions include 310-312, 364-365, and Arg403; these read RAD and GD.

The protein belongs to the NAPRTase family.

It carries out the reaction beta-nicotinamide D-ribonucleotide + diphosphate = 5-phospho-alpha-D-ribose 1-diphosphate + nicotinamide + H(+). It participates in cofactor biosynthesis; NAD(+) biosynthesis; nicotinamide D-ribonucleotide from 5-phospho-alpha-D-ribose 1-diphosphate and nicotinamide: step 1/1. Catalyzes the condensation of nicotinamide with 5-phosphoribosyl-1-pyrophosphate to yield nicotinamide mononucleotide, an intermediate in the biosynthesis of NAD. The sequence is that of Nicotinamide phosphoribosyltransferase from Mycoplasma genitalium (strain ATCC 33530 / DSM 19775 / NCTC 10195 / G37) (Mycoplasmoides genitalium).